A 727-amino-acid polypeptide reads, in one-letter code: ADP-ribosylation factor-binding protein GGA3 (727 aa).

In terms of domain architecture, VHS spans 16–146 (ATNPSNRQED…MLKRQGIVQS (131 aa)). Residues S159 and S275 each carry the phosphoserine modification. One can recognise a GAT domain in the interval 171-298 (DEEKSKLLAK…VINSYKTIIE (128 aa)). The tract at residues 299–597 (GQIINGEVTT…VHVPLESIKP (299 aa)) is unstructured hinge. The segment at 334 to 385 (TPSSSSPVLAPAPAPPTSGIPILPPPPQTSGPPRSRSSSQAEAPSGPDSTNN) is disordered. A compositionally biased stretch (pro residues) spans 343–363 (APAPAPPTSGIPILPPPPQTS). A compositionally biased stretch (low complexity) spans 364-374 (GPPRSRSSSQA). The DXXLL motif lies at 391–395 (DEELL). The interval 400-419 (SDPAPTAPKESAGNSPWHLF) is disordered. In terms of domain architecture, GAE spans 598–719 (SSALPVTAYD…TELGEVDQFP (122 aa)).

This sequence belongs to the GGA protein family. Monomer. Interacts with GGA1 and GGA2. Binds to clathrin and activated ARFs, such as ARF1, ARF5 and ARF6. Binds RABEP1 and RABGEF1. Interacts with the membrane proteins M6PR/CD-MPR and IGF2R/CI-MPR and the accessory proteins SYNRG, EPN4, NECAP1, NECAP2 and AFTPH/aftiphilin. Interacts with TSG101 and UBC. Interacts with ADRA2B. Interacts with NTRK1; the interaction is independent of NTRK1 activation and ubiquitination. Interacts (via VHS domain) with BACE1 (via DXXLL motif). Phosphorylated by CK2 and dephosphorylated by PP2A. Phosphorylation of GGA3 allows the internal DXXLL motif to bind the VHS domain and to inhibit the recognition of cargo signals. In terms of processing, ubiquitinated. Post-translationally, proteolytically cleaved during apoptosis by CASP3.

The protein resides in the golgi apparatus. It is found in the trans-Golgi network membrane. Its subcellular location is the endosome membrane. The protein localises to the early endosome membrane. It localises to the recycling endosome membrane. Its function is as follows. Plays a role in protein sorting and trafficking between the trans-Golgi network (TGN) and endosomes. Mediates the ARF-dependent recruitment of clathrin to the TGN and binds ubiquitinated proteins and membrane cargo molecules with a cytosolic acidic cluster-dileucine (DXXLL) motif. Mediates export of the GPCR receptor ADRA2B to the cell surface. Involved in BACE1 transport and sorting as well as regulation of BACE1 protein levels. Regulates retrograde transport of BACE1 from endosomes to the trans-Golgi network via interaction through the VHS motif and dependent of BACE1 phosphorylation. Modulates BACE1 protein levels independently of the interaction between VHS domain and DXXLL motif through recognition of ubiquitination. Key player in a novel DXXLL-mediated endosomal sorting machinery to the recycling pathway that targets NTRK1 to the plasma membrane. The protein is ADP-ribosylation factor-binding protein GGA3 of Rattus norvegicus (Rat).